The chain runs to 419 residues: tRNA(Met) cytidine acetate ligase (419 aa).

Residues 7–20, G101, N163, and R188 contribute to the ATP site; that span reads ITEY…HLHH.

This sequence belongs to the TmcAL family.

It localises to the cytoplasm. The enzyme catalyses cytidine(34) in elongator tRNA(Met) + acetate + ATP = N(4)-acetylcytidine(34) in elongator tRNA(Met) + AMP + diphosphate. In terms of biological role, catalyzes the formation of N(4)-acetylcytidine (ac(4)C) at the wobble position of elongator tRNA(Met), using acetate and ATP as substrates. First activates an acetate ion to form acetyladenylate (Ac-AMP) and then transfers the acetyl group to tRNA to form ac(4)C34. The polypeptide is tRNA(Met) cytidine acetate ligase (Syntrophotalea carbinolica (strain DSM 2380 / NBRC 103641 / GraBd1) (Pelobacter carbinolicus)).